A 914-amino-acid chain; its full sequence is Coatomer subunit beta' (914 aa).

WD repeat units lie at residues 13–54, 55–94, 97–136, 140–180, 183–224, 227–266, and 352–390; these read SRSD…KDFE, VCDV…KVHS, AHSD…ACQR, GHTH…ANFT, GHEK…CVQT, GHAQ…LETC, and ACEI…NKAF.

It belongs to the WD repeat COPB2 family. Oligomeric complex that consists of at least the alpha, beta, beta', gamma, delta, epsilon and zeta subunits.

Its subcellular location is the cytoplasm. The protein localises to the golgi apparatus membrane. It localises to the cytoplasmic vesicle. The protein resides in the COPI-coated vesicle membrane. Functionally, the coatomer is a cytosolic protein complex that binds to dilysine motifs and reversibly associates with Golgi non-clathrin-coated vesicles, which further mediate biosynthetic protein transport from the ER, via the Golgi up to the trans Golgi network. Coatomer complex is required for budding from Golgi membranes, and is essential for the retrograde Golgi-to-ER transport of dilysine-tagged proteins. The polypeptide is Coatomer subunit beta' (Drosophila melanogaster (Fruit fly)).